A 251-amino-acid chain; its full sequence is Probable transcriptional regulatory protein CT1665 (251 aa).

This sequence belongs to the TACO1 family.

Its subcellular location is the cytoplasm. This Chlorobaculum tepidum (strain ATCC 49652 / DSM 12025 / NBRC 103806 / TLS) (Chlorobium tepidum) protein is Probable transcriptional regulatory protein CT1665.